Reading from the N-terminus, the 182-residue chain is Ribosome maturation factor RimM (182 aa).

The 80-residue stretch at 103–182 (EDDYYWKDLM…RVEVDWDPGF (80 aa)) folds into the PRC barrel domain.

The protein belongs to the RimM family. In terms of assembly, binds ribosomal protein uS19.

It is found in the cytoplasm. An accessory protein needed during the final step in the assembly of 30S ribosomal subunit, possibly for assembly of the head region. Essential for efficient processing of 16S rRNA. May be needed both before and after RbfA during the maturation of 16S rRNA. It has affinity for free ribosomal 30S subunits but not for 70S ribosomes. This chain is Ribosome maturation factor RimM, found in Yersinia pestis bv. Antiqua (strain Antiqua).